The following is a 198-amino-acid chain: Cytochrome c oxidase subunit 2 (198 aa).

The helical transmembrane segment at Ala-1–Met-13 threads the bilayer. Topologically, residues Leu-14–Gln-26 are mitochondrial matrix. Residues Glu-27 to Met-54 traverse the membrane as a helical segment. At Asp-55–Leu-198 the chain is on the mitochondrial intermembrane side. The Cu cation site is built by His-128, Cys-163, Glu-165, Cys-167, His-171, and Met-174. A Mg(2+)-binding site is contributed by Glu-165.

The protein belongs to the cytochrome c oxidase subunit 2 family. As to quaternary structure, component of the cytochrome c oxidase (complex IV, CIV), a multisubunit enzyme composed of 14 subunits. The complex is composed of a catalytic core of 3 subunits MT-CO1, MT-CO2 and MT-CO3, encoded in the mitochondrial DNA, and 11 supernumerary subunits COX4I, COX5A, COX5B, COX6A, COX6B, COX6C, COX7A, COX7B, COX7C, COX8 and NDUFA4, which are encoded in the nuclear genome. The complex exists as a monomer or a dimer and forms supercomplexes (SCs) in the inner mitochondrial membrane with NADH-ubiquinone oxidoreductase (complex I, CI) and ubiquinol-cytochrome c oxidoreductase (cytochrome b-c1 complex, complex III, CIII), resulting in different assemblies (supercomplex SCI(1)III(2)IV(1) and megacomplex MCI(2)III(2)IV(2)). Found in a complex with TMEM177, COA6, COX18, COX20, SCO1 and SCO2. Interacts with TMEM177 in a COX20-dependent manner. Interacts with COX20. Interacts with COX16. The cofactor is Cu cation.

Its subcellular location is the mitochondrion inner membrane. The catalysed reaction is 4 Fe(II)-[cytochrome c] + O2 + 8 H(+)(in) = 4 Fe(III)-[cytochrome c] + 2 H2O + 4 H(+)(out). In terms of biological role, component of the cytochrome c oxidase, the last enzyme in the mitochondrial electron transport chain which drives oxidative phosphorylation. The respiratory chain contains 3 multisubunit complexes succinate dehydrogenase (complex II, CII), ubiquinol-cytochrome c oxidoreductase (cytochrome b-c1 complex, complex III, CIII) and cytochrome c oxidase (complex IV, CIV), that cooperate to transfer electrons derived from NADH and succinate to molecular oxygen, creating an electrochemical gradient over the inner membrane that drives transmembrane transport and the ATP synthase. Cytochrome c oxidase is the component of the respiratory chain that catalyzes the reduction of oxygen to water. Electrons originating from reduced cytochrome c in the intermembrane space (IMS) are transferred via the dinuclear copper A center (CU(A)) of subunit 2 and heme A of subunit 1 to the active site in subunit 1, a binuclear center (BNC) formed by heme A3 and copper B (CU(B)). The BNC reduces molecular oxygen to 2 water molecules using 4 electrons from cytochrome c in the IMS and 4 protons from the mitochondrial matrix. The polypeptide is Cytochrome c oxidase subunit 2 (MT-CO2) (Tinamus major (Great tinamou)).